A 215-amino-acid polypeptide reads, in one-letter code: Cytochrome b6 (215 aa).

A helical membrane pass occupies residues 32–52; sequence IFYCLGGITLTCFLVQVATGF. Cys35 contributes to the heme c binding site. Heme b contacts are provided by His86 and His100. 3 helical membrane-spanning segments follow: residues 90–110, 116–136, and 186–206; these read ASMM…TGGF, LTWV…VTGY, and LHTF…FPMI. Residues His187 and His202 each coordinate heme b.

It belongs to the cytochrome b family. PetB subfamily. In terms of assembly, the 4 large subunits of the cytochrome b6-f complex are cytochrome b6, subunit IV (17 kDa polypeptide, PetD), cytochrome f and the Rieske protein, while the 4 small subunits are PetG, PetL, PetM and PetN. The complex functions as a dimer. Heme b serves as cofactor. Requires heme c as cofactor.

It localises to the plastid. Its subcellular location is the chloroplast thylakoid membrane. In terms of biological role, component of the cytochrome b6-f complex, which mediates electron transfer between photosystem II (PSII) and photosystem I (PSI), cyclic electron flow around PSI, and state transitions. The polypeptide is Cytochrome b6 (Saccharum hybrid (Sugarcane)).